The chain runs to 308 residues: MANVFVNINDLSNQELLSMIHQALLFKSGQFIPVINRQVVANLFFENSTRTATSFQMAEMKLGYQRIVIDPNKSSATKGESLEDTLKTLKAIGIDTIVIRHSLRDWYQPFYEMAGKEVPKLVNAGDGNGQHPSQSLLDLMTIVEHFENFVGLRVRIIGDIYHSRVARSNAEILNRLGVEVTFSGPKEWQDQSLEQFGSFVGIDKDLGKQDVIMLLRVQHERLTDEENQDFTIDKYHEDYGLTQDRYRKLKSNAIIMHPAPVNRDVEIDSDLVESDKSRIFQQMKNGVYARMAILNSLTIPSLISGVGK.

Carbamoyl phosphate-binding residues include R50 and T51. K78 is a binding site for L-aspartate. 3 residues coordinate carbamoyl phosphate: R100, H131, and Q134. L-aspartate contacts are provided by R164 and R216. A259 and P260 together coordinate carbamoyl phosphate.

The protein belongs to the aspartate/ornithine carbamoyltransferase superfamily. ATCase family. In terms of assembly, heterododecamer (2C3:3R2) of six catalytic PyrB chains organized as two trimers (C3), and six regulatory PyrI chains organized as three dimers (R2).

It carries out the reaction carbamoyl phosphate + L-aspartate = N-carbamoyl-L-aspartate + phosphate + H(+). It participates in pyrimidine metabolism; UMP biosynthesis via de novo pathway; (S)-dihydroorotate from bicarbonate: step 2/3. Its function is as follows. Catalyzes the condensation of carbamoyl phosphate and aspartate to form carbamoyl aspartate and inorganic phosphate, the committed step in the de novo pyrimidine nucleotide biosynthesis pathway. The sequence is that of Aspartate carbamoyltransferase catalytic subunit from Oenococcus oeni (strain ATCC BAA-331 / PSU-1).